The primary structure comprises 307 residues: B3 domain-containing protein At5g18000 (307 aa).

The TF-B3 1 DNA-binding region spans 20 to 115; sequence FFKILRREDH…CFNVTIFEAD (96 aa). Disordered regions lie at residues 122 to 141 and 151 to 209; these read PRKT…RKSI and IESW…SEAG. Polar residues predominate over residues 166–177; that stretch reads ESTSGRLTQKQE. Over residues 178-192 the composition is skewed to basic and acidic residues; it reads LNLRKKEADKTEKSK. Residues 214–307 constitute a DNA-binding region (TF-B3 2); it reads IPEFKLTIKK…TEMRVKVSKE (94 aa).

The protein localises to the nucleus. In Arabidopsis thaliana (Mouse-ear cress), this protein is B3 domain-containing protein At5g18000.